The sequence spans 762 residues: 5-methyltetrahydropteroyltriglutamate--homocysteine methyltransferase (762 aa).

Residues 16–19 and K118 contribute to the 5-methyltetrahydropteroyltri-L-glutamate site; that span reads RELK. Residues 439-441 and E492 each bind L-homocysteine; that span reads IGS. Residues 439–441 and E492 contribute to the L-methionine site; that span reads IGS. 5-methyltetrahydropteroyltri-L-glutamate contacts are provided by residues 523-524 and W569; that span reads RC. Residue D607 participates in L-homocysteine binding. D607 lines the L-methionine pocket. E613 lines the 5-methyltetrahydropteroyltri-L-glutamate pocket. Zn(2+) is bound by residues H649, C651, and E673. H702 (proton donor) is an active-site residue. C734 contacts Zn(2+).

It belongs to the vitamin-B12 independent methionine synthase family. It depends on Zn(2+) as a cofactor.

The catalysed reaction is 5-methyltetrahydropteroyltri-L-glutamate + L-homocysteine = tetrahydropteroyltri-L-glutamate + L-methionine. The protein operates within amino-acid biosynthesis; L-methionine biosynthesis via de novo pathway; L-methionine from L-homocysteine (MetE route): step 1/1. Functionally, catalyzes the transfer of a methyl group from 5-methyltetrahydrofolate to homocysteine resulting in methionine formation. The sequence is that of 5-methyltetrahydropteroyltriglutamate--homocysteine methyltransferase from Pseudomonas entomophila (strain L48).